The chain runs to 101 residues: NADH-quinone oxidoreductase subunit K (101 aa).

3 helical membrane passes run 4–24 (LEHY…GIFL), 30–50 (IVIL…LVAF), and 65–85 (FVLT…VTFF).

It belongs to the complex I subunit 4L family. NDH-1 is composed of 14 different subunits. Subunits NuoA, H, J, K, L, M, N constitute the membrane sector of the complex.

The protein localises to the cell inner membrane. The enzyme catalyses a quinone + NADH + 5 H(+)(in) = a quinol + NAD(+) + 4 H(+)(out). NDH-1 shuttles electrons from NADH, via FMN and iron-sulfur (Fe-S) centers, to quinones in the respiratory chain. The immediate electron acceptor for the enzyme in this species is believed to be ubiquinone. Couples the redox reaction to proton translocation (for every two electrons transferred, four hydrogen ions are translocated across the cytoplasmic membrane), and thus conserves the redox energy in a proton gradient. The protein is NADH-quinone oxidoreductase subunit K of Cereibacter sphaeroides (strain ATCC 17029 / ATH 2.4.9) (Rhodobacter sphaeroides).